The chain runs to 285 residues: Geranyl diphosphate 2-C-methyltransferase (285 aa).

This sequence belongs to the geranyl diphosphate 2-C-methyltransferase family. Mg(2+) is required as a cofactor.

The catalysed reaction is (2E)-geranyl diphosphate + S-adenosyl-L-methionine = (E)-2-methylgeranyl diphosphate + S-adenosyl-L-homocysteine + H(+). Its function is as follows. Catalyzes the SAM-dependent methylation of geranyl diphosphate (GPP) to yield (E)-2-methylgeranyl diphosphate (2-MeGPP). This is Geranyl diphosphate 2-C-methyltransferase from Saccharopolyspora erythraea (strain ATCC 11635 / DSM 40517 / JCM 4748 / NBRC 13426 / NCIMB 8594 / NRRL 2338).